The following is a 331-amino-acid chain: UDP-GalNAc:beta-1,3-N-acetylgalactosaminyltransferase 1 (331 aa).

The Cytoplasmic portion of the chain corresponds to 1 to 20; it reads MAPAVLTAIPNRMSLRSLKW. Residues 21–43 traverse the membrane as a helical; Signal-anchor for type II membrane protein segment; that stretch reads SLLLLSLLSFLVIWYLSLPHYNV. Residues 44–331 are Lumenal-facing; the sequence is IERVNWMYFY…VMLRNTTCHY (288 aa). N-linked (GlcNAc...) asparagine glycans are attached at residues Asn72, Asn154, Asn198, Asn212, and Asn326.

The protein belongs to the glycosyltransferase 31 family. The cofactor is Mg(2+).

The protein localises to the golgi apparatus membrane. The enzyme catalyses a globoside Gb3Cer (d18:1(4E)) + UDP-N-acetyl-alpha-D-galactosamine = a globoside Gb4Cer (d18:1(4E)) + UDP + H(+). It functions in the pathway protein modification; protein glycosylation. Functionally, transfers N-acetylgalactosamine onto globotriaosylceramide. Plays a critical role in preimplantation stage embryonic development. The sequence is that of UDP-GalNAc:beta-1,3-N-acetylgalactosaminyltransferase 1 (B3galnt1) from Rattus norvegicus (Rat).